The following is a 363-amino-acid chain: MAP kinase kinase mkk-4 (363 aa).

The disordered stretch occupies residues 1–38; it reads MVQEDDENLRNSMSLRPTSLSTRPTSLSVNGNEKTLPE. Over residues 14 to 28 the composition is skewed to low complexity; sequence SLRPTSLSTRPTSLS. A Protein kinase domain is found at 66-330; that stretch reads LQDLGAIGNG…YDTLKSFDFY (265 aa). ATP-binding positions include 72–80 and K95; that span reads IGNGNFGTV. D194 functions as the Proton acceptor in the catalytic mechanism.

This sequence belongs to the protein kinase superfamily. STE Ser/Thr protein kinase family. MAP kinase kinase subfamily. Expressed in the pharynx, including the corpus, isthmus and terminal bulb.

The protein localises to the cytoplasm. The enzyme catalyses L-seryl-[protein] + ATP = O-phospho-L-seryl-[protein] + ADP + H(+). It catalyses the reaction L-threonyl-[protein] + ATP = O-phospho-L-threonyl-[protein] + ADP + H(+). The catalysed reaction is L-tyrosyl-[protein] + ATP = O-phospho-L-tyrosyl-[protein] + ADP + H(+). Functionally, activity is required in presynaptic neurons, in a dose-dependent manner, for normal presynaptic development and morphology. Plays a role in the formation of muscle connections, also called muscle arm extensions, between the body wall and the motor axons in the dorsal and ventral cord. This chain is MAP kinase kinase mkk-4 (mkk-4), found in Caenorhabditis elegans.